The chain runs to 382 residues: RNA binding protein fox-1 homolog 1 (382 aa).

The tract at residues 1 to 121 is disordered; sequence MNCEREQLRG…NKSQPKRLHV (121 aa). Polar residues predominate over residues 70-87; that stretch reads QTHSEQSPADTSAQTVSG. Residues 88-99 are compositionally biased toward low complexity; it reads TATQTDDAAPTD. Residues 100-113 are compositionally biased toward polar residues; it reads GQPQTQPSENTENK. Residues 117–193 form the RRM domain; it reads KRLHVSNIPF…RKIEVNNATA (77 aa). At Arg-317 the chain carries Asymmetric dimethylarginine. The interval 357–382 is disordered; sequence MPQGSSPSTDFRGAKLHTSRPLLSGS.

As to quaternary structure, binds to the C-terminus of ATXN2.

It is found in the nucleus. Its subcellular location is the cytoplasm. In terms of biological role, RNA-binding protein that regulates alternative splicing events by binding to 5'-UGCAUGU-3' elements. Prevents binding of U2AF2 to the 3'-splice site. Regulates alternative splicing of tissue-specific exons and of differentially spliced exons during erythropoiesis. The protein is RNA binding protein fox-1 homolog 1 (RBFOX1) of Pongo abelii (Sumatran orangutan).